We begin with the raw amino-acid sequence, 181 residues long: Cyclic AMP-dependent transcription factor ATF-3 (181 aa).

Residue K78 forms a Glycyl lysine isopeptide (Lys-Gly) (interchain with G-Cter in SUMO2) linkage. In terms of domain architecture, bZIP spans 86 to 149 (DERKKRRRER…QHLIYMLNLH (64 aa)). A basic motif region spans residues 88–110 (RKKRRRERNKIAAAKCRNKKKEK). The leucine-zipper stretch occupies residues 114-142 (LQKESEKLESVNAELKAQIEELKNEKQHL). T162 is modified (phosphothreonine). K175 participates in a covalent cross-link: Glycyl lysine isopeptide (Lys-Gly) (interchain with G-Cter in SUMO2).

The protein belongs to the bZIP family. ATF subfamily. Binds DNA as a homodimer or a heterodimer. Interacts with KAT5; promoting KAT5 autoacetylation and KAT5 deubiquitination by USP7.

The protein localises to the nucleus. This protein binds the cAMP response element (CRE) (consensus: 5'-GTGACGT[AC][AG]-3'), a sequence present in many viral and cellular promoters. Represses transcription from promoters with ATF sites. It may repress transcription by stabilizing the binding of inhibitory cofactors at the promoter. Its function is as follows. Activates transcription presumably by sequestering inhibitory cofactors away from the promoters. In terms of biological role, stress-induced isoform, counteracts the transcriptional repression of isoform 1. The polypeptide is Cyclic AMP-dependent transcription factor ATF-3 (Homo sapiens (Human)).